The primary structure comprises 777 residues: Serine/threonine-protein kinase PLK4 (777 aa).

Residues 14-268 enclose the Protein kinase domain; sequence YEVQHLLGKG…LEQVLRHPFL (255 aa). Residues 20–28 and Lys43 each bind ATP; that span reads LGKGGFASV. The Proton acceptor role is filled by Asp139. Polar residues predominate over residues 371–381; the sequence is TNNLAPFTSDS. The interval 371 to 390 is disordered; the sequence is TNNLAPFTSDSDMIPSPVGE. The Cryptic POLO box 1 (CPB1) domain occupies 390 to 507; the sequence is EKRLLMPPLE…ARFVGLVKSK (118 aa). In terms of domain architecture, Cryptic POLO box 2 (CPB2) spans 508-611; the sequence is TPKITFFSSL…GRRPAADMHA (104 aa). Residues 669–748 form the POLO box domain; the sequence is PIKRITVPEI…MPQLQMKLKC (80 aa).

It belongs to the protein kinase superfamily. Ser/Thr protein kinase family. CDC5/Polo subfamily. In terms of assembly, homodimer. Ubiquitinated by the SCF(Slimb) ubiquitin ligase complex; leading to its degradation by the proteasome during interphase and regulating centriole number and ensuring the block to centriole reduplication.

The protein resides in the cytoplasm. It is found in the cytoskeleton. It localises to the microtubule organizing center. Its subcellular location is the centrosome. The protein localises to the centriole. The catalysed reaction is L-seryl-[protein] + ATP = O-phospho-L-seryl-[protein] + ADP + H(+). The enzyme catalyses L-threonyl-[protein] + ATP = O-phospho-L-threonyl-[protein] + ADP + H(+). Serine/threonine-protein kinase that plays a central role in centriole duplication. Able to trigger procentriole formation on the surface of the mother centriole cylinder, using mother centriole as a platform, leading to the recruitment of centriole biogenesis proteins such as sas-6. When overexpressed, it is able to induce centrosome amplification through the simultaneous generation of multiple procentrioles adjoining each parental centriole during S phase. Centrosome amplification following overexpression can initiate tumorigenesis, highlighting the importance of centrosome regulation in cancers. This is Serine/threonine-protein kinase PLK4 (SAK) from Drosophila persimilis (Fruit fly).